Reading from the N-terminus, the 137-residue chain is Small ribosomal subunit protein uS12 (137 aa).

The segment at methionine 1–alanine 23 is disordered. The residue at position 102 (aspartate 102) is a 3-methylthioaspartic acid.

The protein belongs to the universal ribosomal protein uS12 family. As to quaternary structure, part of the 30S ribosomal subunit. Contacts proteins S8 and S17. May interact with IF1 in the 30S initiation complex.

In terms of biological role, with S4 and S5 plays an important role in translational accuracy. Its function is as follows. Interacts with and stabilizes bases of the 16S rRNA that are involved in tRNA selection in the A site and with the mRNA backbone. Located at the interface of the 30S and 50S subunits, it traverses the body of the 30S subunit contacting proteins on the other side and probably holding the rRNA structure together. The combined cluster of proteins S8, S12 and S17 appears to hold together the shoulder and platform of the 30S subunit. This is Small ribosomal subunit protein uS12 from Leuconostoc citreum (strain KM20).